Consider the following 99-residue polypeptide: Small ribosomal subunit protein bS20 (99 aa).

Residues 1–20 (MASAKPKKKNPRLASGRKRV) are compositionally biased toward basic residues. The segment at 1 to 21 (MASAKPKKKNPRLASGRKRVR) is disordered.

The protein belongs to the bacterial ribosomal protein bS20 family.

In terms of biological role, binds directly to 16S ribosomal RNA. This chain is Small ribosomal subunit protein bS20, found in Verminephrobacter eiseniae (strain EF01-2).